Consider the following 1548-residue polypeptide: Lysine-specific demethylase 5D (1548 aa).

In terms of domain architecture, JmjN spans Cys14–Pro55. The ARID domain occupies Thr79–Ser169. Glycyl lysine isopeptide (Lys-Gly) (interchain with G-Cter in SUMO2) cross-links involve residues Lys205, Lys229, Lys244, and Lys279. The tract at residues Cys208–Lys229 is disordered. Residues Ser300 and Ser316 each carry the phosphoserine modification. The PHD-type 1 zinc finger occupies Val325–Ile371. Tyr439 contributes to the 2-oxoglutarate binding site. The 167-residue stretch at Glu467 to Arg633 folds into the JmjC domain. Fe cation-binding residues include His513 and Glu515. Residues Ser521, Asn523, and Lys531 each coordinate 2-oxoglutarate. His601 serves as a coordination point for Fe cation. A C5HC2 zinc finger spans residues Cys706–Met758. Residues Ser889 and Ser893 each carry the phosphoserine modification. Lys1123 participates in a covalent cross-link: Glycyl lysine isopeptide (Lys-Gly) (interchain with G-Cter in SUMO2). The segment at Ile1182–Met1243 adopts a PHD-type 2 zinc-finger fold. At Ser1355 the chain carries Phosphoserine. The segment at Lys1438–Glu1468 is disordered.

This sequence belongs to the JARID1 histone demethylase family. Interacts withPCGF6, MSH5, ZMYND8, AR. Requires L-ascorbate as cofactor. Fe(2+) serves as cofactor.

The protein localises to the nucleus. The enzyme catalyses N(6),N(6),N(6)-trimethyl-L-lysyl(4)-[histone H3] + 3 2-oxoglutarate + 3 O2 = L-lysyl(4)-[histone H3] + 3 formaldehyde + 3 succinate + 3 CO2. In terms of biological role, histone demethylase that specifically demethylates 'Lys-4' of histone H3, thereby playing a central role in histone code. Does not demethylate histone H3 'Lys-9', H3 'Lys-27', H3 'Lys-36', H3 'Lys-79' or H4 'Lys-20'. Demethylates trimethylated and dimethylated but not monomethylated H3 'Lys-4'. May play a role in spermatogenesis. Involved in transcriptional repression of diverse metastasis-associated genes; in this function seems to cooperate with ZMYND8. Suppresses prostate cancer cell invasion. Regulates androgen receptor (AR) transcriptional activity by demethylating H3K4me3 active transcription marks. The polypeptide is Lysine-specific demethylase 5D (Kdm5d) (Mus musculus (Mouse)).